The sequence spans 238 residues: Small ribosomal subunit protein uS2c (238 aa).

The protein belongs to the universal ribosomal protein uS2 family.

Its subcellular location is the plastid. It localises to the chloroplast. In Jasminum nudiflorum (Winter jasmine), this protein is Small ribosomal subunit protein uS2c (rps2).